Consider the following 64-residue polypeptide: Large ribosomal subunit protein bL35 (64 aa).

Residues 1–42 (MPKAKTHSGASKRFRRTGTGKIVRQKANRRHLLEHKPTKRTR) are compositionally biased toward basic residues. The interval 1–64 (MPKAKTHSGA…NSRINKLLNG (64 aa)) is disordered. Over residues 48–58 (TTVSAADNSRI) the composition is skewed to polar residues.

It belongs to the bacterial ribosomal protein bL35 family.

This Mycolicibacterium smegmatis (strain ATCC 700084 / mc(2)155) (Mycobacterium smegmatis) protein is Large ribosomal subunit protein bL35.